Reading from the N-terminus, the 246-residue chain is tRNA (guanine-N(7)-)-methyltransferase (246 aa).

The tract at residues 1–23 is disordered; it reads MIESSSPTPPALHEGAPADVSHP. E75, E100, D127, and D150 together coordinate S-adenosyl-L-methionine. Residue D150 is part of the active site. K154 contributes to the substrate binding site. The tract at residues 156 to 161 is interaction with RNA; that stretch reads KHNKRR. Residues D186 and 225–228 contribute to the substrate site; that span reads TKFE.

The protein belongs to the class I-like SAM-binding methyltransferase superfamily. TrmB family.

It catalyses the reaction guanosine(46) in tRNA + S-adenosyl-L-methionine = N(7)-methylguanosine(46) in tRNA + S-adenosyl-L-homocysteine. Its pathway is tRNA modification; N(7)-methylguanine-tRNA biosynthesis. Catalyzes the formation of N(7)-methylguanine at position 46 (m7G46) in tRNA. The chain is tRNA (guanine-N(7)-)-methyltransferase from Polaromonas naphthalenivorans (strain CJ2).